We begin with the raw amino-acid sequence, 158 residues long: MQSLRAAFRRRTPIFLKPYEFSTNVFGLRCRYYSQVRHNGALTDLEYHRVADDTLDVLNDTFEDLLEEVGKKDYDIQYANGVITLMLGEKGTYVINKQPPAHQIWLSSPVSGPKHYEYSLKSKTWCSTRDEGTLLGILSSEFSKWFSRPIEFKKSEDF.

This sequence belongs to the frataxin family. As to quaternary structure, monomer. Oligomer.

The protein localises to the mitochondrion. The enzyme catalyses 4 Fe(2+) + O2 + 4 H(+) = 4 Fe(3+) + 2 H2O. Functionally, promotes the biosynthesis of heme as well as the assembly and repair of iron-sulfur clusters by delivering Fe(2+) to proteins involved in these pathways. May play a role in the protection against iron-catalyzed oxidative stress through its ability to catalyze the oxidation of Fe(2+) to Fe(3+). May be able to store large amounts of the metal in the form of a ferrihydrite mineral by oligomerization. The polypeptide is Frataxin homolog, mitochondrial (Schizosaccharomyces pombe (strain 972 / ATCC 24843) (Fission yeast)).